A 369-amino-acid polypeptide reads, in one-letter code: Transforming protein Maf (369 aa).

Disordered stretches follow at residues 57–85 and 169–243; these read STPMSTPCSSVPPSPSFSAPSPGSGTDQK and GGAP…GLHF. Residues 173-183 show a composition bias toward basic residues; that stretch reads HYHHHHHHPHH. Residues 184–193 are compositionally biased toward gly residues; sequence GGGGGGGGHP. Positions 194–211 are enriched in low complexity; it reads HGAAPGSAPPSSASSSAA. Residues 212–226 show a composition bias toward gly residues; it reads GSGGGGGGGGGGAGG. The basic motif stretch occupies residues 274 to 299; that stretch reads RLKQKRRTLKNRGYAQSCRFKRVQQR. The bZIP domain occupies 274–337; the sequence is RLKQKRRTLK…DAYKEKYEKL (64 aa). The interval 302-323 is leucine-zipper; sequence LESEKNQLLQQVEHLKQEISRL. The segment at 341 to 369 is disordered; it reads GFRENGSSSDNPSSPEFFMYPRESSTTVM. Positions 345–354 are enriched in polar residues; sequence NGSSSDNPSS.

The protein belongs to the bZIP family. Maf subfamily.

Its subcellular location is the host nucleus. Might be a transcriptional trans-activator. In Galliformes, this protein is Transforming protein Maf (V-MAF).